The following is a 968-amino-acid chain: RNA polymerase-associated protein RapA (968 aa).

The region spanning 164–334 (DVGRRHAPRV…FARLRLLDPN (171 aa)) is the Helicase ATP-binding domain. Residue 177–184 (DEVGLGKT) participates in ATP binding. The DEAH box signature appears at 280 to 283 (DEAH). The region spanning 490–662 (RVEWLMGYLT…YLASPDQTEG (173 aa)) is the Helicase C-terminal domain.

It belongs to the SNF2/RAD54 helicase family. RapA subfamily. Interacts with the RNAP. Has a higher affinity for the core RNAP than for the holoenzyme. Its ATPase activity is stimulated by binding to RNAP.

Functionally, transcription regulator that activates transcription by stimulating RNA polymerase (RNAP) recycling in case of stress conditions such as supercoiled DNA or high salt concentrations. Probably acts by releasing the RNAP, when it is trapped or immobilized on tightly supercoiled DNA. Does not activate transcription on linear DNA. Probably not involved in DNA repair. The protein is RNA polymerase-associated protein RapA of Escherichia coli O1:K1 / APEC.